Here is a 179-residue protein sequence, read N- to C-terminus: Crossover junction endodeoxyribonuclease RuvC (179 aa).

Active-site residues include D7, E67, and D139. D7, E67, and D139 together coordinate Mg(2+).

Belongs to the RuvC family. As to quaternary structure, homodimer which binds Holliday junction (HJ) DNA. The HJ becomes 2-fold symmetrical on binding to RuvC with unstacked arms; it has a different conformation from HJ DNA in complex with RuvA. In the full resolvosome a probable DNA-RuvA(4)-RuvB(12)-RuvC(2) complex forms which resolves the HJ. Mg(2+) serves as cofactor.

The protein localises to the cytoplasm. The catalysed reaction is Endonucleolytic cleavage at a junction such as a reciprocal single-stranded crossover between two homologous DNA duplexes (Holliday junction).. In terms of biological role, the RuvA-RuvB-RuvC complex processes Holliday junction (HJ) DNA during genetic recombination and DNA repair. Endonuclease that resolves HJ intermediates. Cleaves cruciform DNA by making single-stranded nicks across the HJ at symmetrical positions within the homologous arms, yielding a 5'-phosphate and a 3'-hydroxyl group; requires a central core of homology in the junction. The consensus cleavage sequence is 5'-(A/T)TT(C/G)-3'. Cleavage occurs on the 3'-side of the TT dinucleotide at the point of strand exchange. HJ branch migration catalyzed by RuvA-RuvB allows RuvC to scan DNA until it finds its consensus sequence, where it cleaves and resolves the cruciform DNA. In Sorangium cellulosum (strain So ce56) (Polyangium cellulosum (strain So ce56)), this protein is Crossover junction endodeoxyribonuclease RuvC.